Reading from the N-terminus, the 191-residue chain is NADH-quinone oxidoreductase subunit B (191 aa).

Cysteine 52, cysteine 53, cysteine 118, and cysteine 148 together coordinate [4Fe-4S] cluster.

Belongs to the complex I 20 kDa subunit family. NDH-1 is composed of 14 different subunits. Subunits NuoB, C, D, E, F, and G constitute the peripheral sector of the complex. [4Fe-4S] cluster serves as cofactor.

The protein resides in the cell inner membrane. The enzyme catalyses a quinone + NADH + 5 H(+)(in) = a quinol + NAD(+) + 4 H(+)(out). Functionally, NDH-1 shuttles electrons from NADH, via FMN and iron-sulfur (Fe-S) centers, to quinones in the respiratory chain. The immediate electron acceptor for the enzyme in this species is believed to be a menaquinone. Couples the redox reaction to proton translocation (for every two electrons transferred, four hydrogen ions are translocated across the cytoplasmic membrane), and thus conserves the redox energy in a proton gradient. The sequence is that of NADH-quinone oxidoreductase subunit B from Azobacteroides pseudotrichonymphae genomovar. CFP2.